The sequence spans 84 residues: Translational regulator CsrA (84 aa).

Belongs to the CsrA/RsmA family. In terms of assembly, homodimer; the beta-strands of each monomer intercalate to form a hydrophobic core, while the alpha-helices form wings that extend away from the core.

The protein resides in the cytoplasm. In terms of biological role, a translational regulator that binds mRNA to regulate translation initiation and/or mRNA stability. Usually binds in the 5'-UTR at or near the Shine-Dalgarno sequence preventing ribosome-binding, thus repressing translation. Its main target seems to be the major flagellin gene, while its function is anatagonized by FliW. The sequence is that of Translational regulator CsrA from Leptospira borgpetersenii serovar Hardjo-bovis (strain JB197).